We begin with the raw amino-acid sequence, 100 residues long: Integration host factor subunit alpha (100 aa).

The segment at 54–73 (DLRDKRQRPGRNPKTGEEIP) is disordered.

This sequence belongs to the bacterial histone-like protein family. As to quaternary structure, heterodimer of an alpha and a beta chain.

In terms of biological role, this protein is one of the two subunits of integration host factor, a specific DNA-binding protein that functions in genetic recombination as well as in transcriptional and translational control. The protein is Integration host factor subunit alpha of Pseudomonas savastanoi pv. phaseolicola (strain 1448A / Race 6) (Pseudomonas syringae pv. phaseolicola (strain 1448A / Race 6)).